Reading from the N-terminus, the 209-residue chain is Guanylate kinase (209 aa).

The 180-residue stretch at 5-184 folds into the Guanylate kinase-like domain; sequence GLLIVFSGPS…AAERVKRVIE (180 aa). 12-19 is a binding site for ATP; the sequence is GPSGVGKG.

The protein belongs to the guanylate kinase family.

It localises to the cytoplasm. The enzyme catalyses GMP + ATP = GDP + ADP. In terms of biological role, essential for recycling GMP and indirectly, cGMP. In Streptococcus thermophilus (strain CNRZ 1066), this protein is Guanylate kinase.